Consider the following 561-residue polypeptide: MDHERLKSALAVLTVDPAAVGGLWLRSRAGPIRLAFTDTLAKLPFPMALRRLPPNVDDGALYGGLDVAETLHSGKPVLKGGLLDRPSVFILPMAERCTAKLGARLAQALDLRQHALIALDEAAEPDEALPHAVADRLGLFVDLSEVRSIDGPGLLPETAQIERARELLPQVQMPAERVSEIVEGCRQLGISSLRAPMLALTAARILTALSGRTRVEAEDVLHAAELTLAHRALPLQEAPPPPPPPPEPPEPNEGENQQDEQDQIDPLDGIPPEIVVEAVRAMLPDNILQTLNMGSRLRAASGGQGAGQEQIGNRRGRPLPSRKGKLEDDAKIDLVATLRSAAPWQGLRRRQAPAGTERVLLVESSDIHIKRRKEMSDRVLIFAVDASGSAAVARLSEAKGAVELLLGRAYAARDHVSLITFRGTAAQVLLQPSRSLTQTKRQLQGLPGGGGTPLASGMEMAMVTAKQARSRGMTPTIALLTDGRGNIALDGTANRELAGEQATKVARAIRASGMPAVIIDTAMRPNPALVDLARTMDAHYIALPRATAHKMADVLGAALEA.

2 disordered regions span residues 234 to 268 and 298 to 324; these read PLQE…DPLD and RAAS…SRKG. Positions 237–249 are enriched in pro residues; that stretch reads EAPPPPPPPPEPP. Positions 250–265 are enriched in acidic residues; it reads EPNEGENQQDEQDQID. Over residues 314 to 323 the composition is skewed to basic residues; that stretch reads RRGRPLPSRK. Residues 379–559 enclose the VWFA domain; it reads VLIFAVDASG…KMADVLGAAL (181 aa).

Belongs to the Mg-chelatase subunits D/I family.

The enzyme catalyses protoporphyrin IX + Mg(2+) + ATP + H2O = Mg-protoporphyrin IX + ADP + phosphate + 3 H(+). Its pathway is porphyrin-containing compound metabolism; bacteriochlorophyll biosynthesis. Involved in bacteriochlorophyll biosynthesis; introduces a magnesium ion into protoporphyrin IX to yield Mg-protoporphyrin IX. The polypeptide is Magnesium-chelatase 60 kDa subunit (bchD) (Rhodobacter capsulatus (strain ATCC BAA-309 / NBRC 16581 / SB1003)).